We begin with the raw amino-acid sequence, 279 residues long: Alcohol dehydrogenase-related 31 kDa protein (279 aa).

11–34 (YVADCGGIALETSKVLMTKNIAKL) lines the NAD(+) pocket. Substrate is bound at residue Ser139. The active-site Proton acceptor is Tyr152.

This sequence belongs to the short-chain dehydrogenases/reductases (SDR) family.

The polypeptide is Alcohol dehydrogenase-related 31 kDa protein (Adhr) (Drosophila madeirensis (Fruit fly)).